Here is an 84-residue protein sequence, read N- to C-terminus: Beta-toxin Ct16 (84 aa).

The first 19 residues, 1–19 (MNYFILLFVATFLLLDVNC), serve as a signal peptide directing secretion. In terms of domain architecture, LCN-type CS-alpha/beta spans 21 to 80 (KDGYPVDANNCKFECWKNEYCDELCKAKRAESGYCYKLKLSCWCEGLPDDEPTKTSDRCY). 4 disulfide bridges follow: C31/C79, C35/C55, C41/C62, and C45/C64. T82 is subject to Threonine amide.

Belongs to the long (4 C-C) scorpion toxin superfamily. Sodium channel inhibitor family. Alpha subfamily. In terms of tissue distribution, expressed by the venom gland.

Its subcellular location is the secreted. Functionally, alpha toxins bind voltage-independently at site-3 of sodium channels (Nav) and inhibit the inactivation of the activated channels, thereby blocking neuronal transmission. Is possibly toxic to mice. The polypeptide is Beta-toxin Ct16 (Centruroides tecomanus (Scorpion)).